A 311-amino-acid chain; its full sequence is Acetyl-coenzyme A carboxylase carboxyl transferase subunit beta (311 aa).

The CoA carboxyltransferase N-terminal domain occupies Leu-27–Gly-296. 4 residues coordinate Zn(2+): Cys-31, Cys-34, Cys-50, and Cys-53. The segment at Cys-31–Cys-53 adopts a C4-type zinc-finger fold. Residues Ala-286 to Pro-299 are compositionally biased toward low complexity. The interval Ala-286–Asp-311 is disordered.

It belongs to the AccD/PCCB family. In terms of assembly, acetyl-CoA carboxylase is a heterohexamer composed of biotin carboxyl carrier protein (AccB), biotin carboxylase (AccC) and two subunits each of ACCase subunit alpha (AccA) and ACCase subunit beta (AccD). The cofactor is Zn(2+).

Its subcellular location is the cytoplasm. It carries out the reaction N(6)-carboxybiotinyl-L-lysyl-[protein] + acetyl-CoA = N(6)-biotinyl-L-lysyl-[protein] + malonyl-CoA. It participates in lipid metabolism; malonyl-CoA biosynthesis; malonyl-CoA from acetyl-CoA: step 1/1. Component of the acetyl coenzyme A carboxylase (ACC) complex. Biotin carboxylase (BC) catalyzes the carboxylation of biotin on its carrier protein (BCCP) and then the CO(2) group is transferred by the transcarboxylase to acetyl-CoA to form malonyl-CoA. In Alkalilimnicola ehrlichii (strain ATCC BAA-1101 / DSM 17681 / MLHE-1), this protein is Acetyl-coenzyme A carboxylase carboxyl transferase subunit beta.